Here is a 363-residue protein sequence, read N- to C-terminus: tRNA/tmRNA (uracil-C(5))-methyltransferase (363 aa).

S-adenosyl-L-methionine is bound by residues Gln-187, Tyr-215, Asn-220, Glu-236, and Asp-296. Residue Cys-321 is the Nucleophile of the active site. Glu-355 (proton acceptor) is an active-site residue.

It belongs to the class I-like SAM-binding methyltransferase superfamily. RNA M5U methyltransferase family. TrmA subfamily.

It catalyses the reaction uridine(54) in tRNA + S-adenosyl-L-methionine = 5-methyluridine(54) in tRNA + S-adenosyl-L-homocysteine + H(+). The catalysed reaction is uridine(341) in tmRNA + S-adenosyl-L-methionine = 5-methyluridine(341) in tmRNA + S-adenosyl-L-homocysteine + H(+). Its function is as follows. Dual-specificity methyltransferase that catalyzes the formation of 5-methyluridine at position 54 (m5U54) in all tRNAs, and that of position 341 (m5U341) in tmRNA (transfer-mRNA). This Haemophilus influenzae (strain PittEE) protein is tRNA/tmRNA (uracil-C(5))-methyltransferase.